The following is a 732-amino-acid chain: Zinc/cadmium/lead-transporting P-type ATPase (732 aa).

The Cytoplasmic portion of the chain corresponds to M1–R124. Residues T48 to R112 enclose the HMA domain. D58, C59, and C62 together coordinate Zn(2+). A helical membrane pass occupies residues L125 to E145. A topological domain (periplasmic) is located at residue Q146. A helical transmembrane segment spans residues F147 to I167. The Cytoplasmic portion of the chain corresponds to A168–S179. A helical transmembrane segment spans residues Y180 to I197. Residues G198 to E202 are Periplasmic-facing. A helical membrane pass occupies residues A203 to S222. Residues R223–P356 are Cytoplasmic-facing. A helical transmembrane segment spans residues A357–W377. The Periplasmic segment spans residues Q378–K383. A helical membrane pass occupies residues G384–I404. Residues C392 and C394 each contribute to the Zn(2+) site. Residues T405 to N685 lie on the Cytoplasmic side of the membrane. The 4-aspartylphosphate intermediate role is filled by D436. Mg(2+) contacts are provided by D436, T438, and D628. The helical transmembrane segment at I686–L702 threads the bilayer. Residues G703–L707 lie on the Periplasmic side of the membrane. Residues W708–L729 form a helical membrane-spanning segment. D714 is a Zn(2+) binding site. The Cytoplasmic portion of the chain corresponds to R730 to R732.

This sequence belongs to the cation transport ATPase (P-type) (TC 3.A.3) family. Type IB subfamily.

It is found in the cell inner membrane. It catalyses the reaction Pb(2+)(in) + ATP + H2O = Pb(2+)(out) + ADP + phosphate + H(+). It carries out the reaction Zn(2+)(in) + ATP + H2O = Zn(2+)(out) + ADP + phosphate + H(+). The catalysed reaction is Cd(2+)(in) + ATP + H2O = Cd(2+)(out) + ADP + phosphate + H(+). Its activity is regulated as follows. Inhibited by orthovanadate. Its function is as follows. Confers resistance to zinc, cadmium and lead. Couples the hydrolysis of ATP with the export of zinc, cadmium or lead, with highest activity when the metals are present as metal-thiolate complexes. Can also bind nickel, copper, cobalt and mercury. In Escherichia coli (strain K12), this protein is Zinc/cadmium/lead-transporting P-type ATPase.